The primary structure comprises 432 residues: Adenylosuccinate synthetase (432 aa).

GTP contacts are provided by residues 13 to 19 and 41 to 43; these read GDEGKGK and GHT. Residue Asp14 is the Proton acceptor of the active site. Mg(2+) is bound by residues Asp14 and Gly41. Residues 14-17, 39-42, Thr130, Arg144, Gln225, Thr240, and Arg304 each bind IMP; these read DEGK and NAGH. Residue His42 is the Proton donor of the active site. Residue 300 to 306 participates in substrate binding; the sequence is ATTGRRR. Residues Arg306, 332–334, and 415–417 each bind GTP; these read KLD and STG.

This sequence belongs to the adenylosuccinate synthetase family. As to quaternary structure, homodimer. Mg(2+) serves as cofactor.

The protein localises to the cytoplasm. It catalyses the reaction IMP + L-aspartate + GTP = N(6)-(1,2-dicarboxyethyl)-AMP + GDP + phosphate + 2 H(+). Its pathway is purine metabolism; AMP biosynthesis via de novo pathway; AMP from IMP: step 1/2. Its function is as follows. Plays an important role in the de novo pathway of purine nucleotide biosynthesis. Catalyzes the first committed step in the biosynthesis of AMP from IMP. The chain is Adenylosuccinate synthetase from Escherichia coli (strain K12).